The following is a 185-amino-acid chain: dCTP deaminase (185 aa).

DCTP is bound by residues 107-112, 131-133, Gln152, Tyr166, and Gln176; these read KSTYAR and TLE. The active-site Proton donor/acceptor is Glu133.

This sequence belongs to the dCTP deaminase family. Homotrimer.

It carries out the reaction dCTP + H2O + H(+) = dUTP + NH4(+). Its pathway is pyrimidine metabolism; dUMP biosynthesis; dUMP from dCTP (dUTP route): step 1/2. Functionally, catalyzes the deamination of dCTP to dUTP. This chain is dCTP deaminase, found in Neorickettsia sennetsu (strain ATCC VR-367 / Miyayama) (Ehrlichia sennetsu).